Reading from the N-terminus, the 1150-residue chain is PAN2-PAN3 deadenylation complex catalytic subunit pan2 (1150 aa).

WD repeat units follow at residues 96–139 and 270–309; these read AHEE…DKLH and ANVS…HFNE. The segment at 310 to 446 is linker; it reads MSKEAEFGDV…GAKINGETDD (137 aa). In terms of domain architecture, USP spans 447 to 816; it reads DPLLKYSNVE…IPCVLAYQVQ (370 aa). The 179-residue stretch at 865–1043 folds into the Exonuclease domain; that stretch reads VALDTEFVDL…IEDARMALRL (179 aa). The a divalent metal cation site is built by Asp-868, Glu-870, Asp-977, and Asp-1036. The interval 1074 to 1150 is disordered; the sequence is PPPRNGVPTV…GDFFSGSPLK (77 aa). The span at 1091 to 1106 shows a compositional bias: polar residues; that stretch reads VTMQNNSGRNTPSTSD. Over residues 1108-1120 the composition is skewed to low complexity; that stretch reads AGAAASAPATPRQ.

Belongs to the peptidase C19 family. PAN2 subfamily. In terms of assembly, forms a heterotrimer with an asymmetric homodimer of the regulatory subunit pan3 to form the poly(A)-nuclease (PAN) deadenylation complex. Requires a divalent metal cation as cofactor.

It localises to the cytoplasm. The catalysed reaction is Exonucleolytic cleavage of poly(A) to 5'-AMP.. With respect to regulation, positively regulated by the regulatory subunit pan3. Catalytic subunit of the poly(A)-nuclease (PAN) deadenylation complex, one of two cytoplasmic mRNA deadenylases involved in mRNA turnover. PAN specifically shortens poly(A) tails of RNA and the activity is stimulated by poly(A)-binding protein pab1. PAN deadenylation is followed by rapid degradation of the shortened mRNA tails by the CCR4-NOT complex. Deadenylated mRNAs are then degraded by two alternative mechanisms, namely exosome-mediated 3'-5' exonucleolytic degradation, or deadenylation-dependent mRNA decaping and subsequent 5'-3' exonucleolytic degradation by xrn1. May also be involved in post-transcriptional maturation of mRNA poly(A) tails. The chain is PAN2-PAN3 deadenylation complex catalytic subunit pan2 from Aspergillus niger (strain ATCC MYA-4892 / CBS 513.88 / FGSC A1513).